Here is a 102-residue protein sequence, read N- to C-terminus: Large ribosomal subunit protein bL21 (102 aa).

The protein belongs to the bacterial ribosomal protein bL21 family. In terms of assembly, part of the 50S ribosomal subunit. Contacts protein L20.

This protein binds to 23S rRNA in the presence of protein L20. This Bifidobacterium longum subsp. infantis (strain ATCC 15697 / DSM 20088 / JCM 1222 / NCTC 11817 / S12) protein is Large ribosomal subunit protein bL21.